The primary structure comprises 545 residues: MLQDKGLSESEEAFRAPGPALGEASAANAPEPALAAPGLSGAALGSPPGPGADVVAAAAAEQTIENIKVGLHEKELWKKFHEAGTEMIITKAGRRMFPSYKVKVTGMNPKTKYILLIDIVPADDHRYKFCDNKWMVAGKAEPAMPGRLYVHPDSPATGAHWMRQLVSFQKLKLTNNHLDPFGHIILNSMHKYQPRLHIVKADENNAFGSKNTAFCTHVFPETSFISVTSYQNHKITQLKIENNPFAKGFRGSDDSDLRVARLQSKEYPVISKSIMRQRLISPQLSATPDVGPLLGTHQALQHYQHENGAHSQLAEPQDLPLSTFPTQRDSSLFYHCLKRRDGTRHLDLPCKRSYLEAPSSVGEDHYFRSPPPYDQQMLSPSYCSEVTPREACMYSGSGPEIAGVSGVDDLPPPPLSCNMWTSVSPYTSYSVQTMETVPYQPFPTHFTATTMMPRLPTLSAQSSQPPGNAHFSVYNQLSQSQVRERGPSASFPRERGLPQGCERKPPSPHLNAANEFLYSQTFSLSRESSLQYHSGMGTVENWTDG.

The segment at residues 71–251 (LHEKELWKKF…NNPFAKGFRG (181 aa)) is a DNA-binding region (T-box). The interval 479-509 (QSQVRERGPSASFPRERGLPQGCERKPPSPH) is disordered. Residues 482 to 505 (VRERGPSASFPRERGLPQGCERKP) are compositionally biased toward basic and acidic residues. S507 is modified (phosphoserine).

It is found in the nucleus. In terms of biological role, transcriptional regulator that has an essential role in the organogenesis of lungs, pelvis, and hindlimbs. This is T-box transcription factor TBX4 (TBX4) from Homo sapiens (Human).